We begin with the raw amino-acid sequence, 138 residues long: Large ribosomal subunit protein uL16 (138 aa).

Basic residues predominate over residues 1-15 (MLSPKKVKYRKKQRG). A disordered region spans residues 1–21 (MLSPKKVKYRKKQRGRLSGEA).

The protein belongs to the universal ribosomal protein uL16 family. In terms of assembly, part of the 50S ribosomal subunit.

In terms of biological role, binds 23S rRNA and is also seen to make contacts with the A and possibly P site tRNAs. The chain is Large ribosomal subunit protein uL16 from Borreliella afzelii (strain PKo) (Borrelia afzelii).